The chain runs to 283 residues: MFYLIGLGLFDEKDITLRGLETVKKCQRIYLEAYTSILLVQKEKLEELYGKEVILADREMVESSSDEILKDADNCDVAMLVVGDPMGATTHADLVIRARELKIPVRMIHNASIMNAIGACGLQLYKFGQTVSLVFFENNYRPQSFYDHIKENVSLGLHTLVLLDIKVKEQSWENLARGRKVYEPPRYMSASLAAQQMLEVEEDRQENICTPDSLCVAVGRMGSDDQVIFAGTLQELAEHDIGPPLHSVVLVGRDVHDLELEFLRAYAVNLENFDRVAKTYLEK.

S-adenosyl-L-methionine-binding positions include L9, D84, G87, 112 to 113 (SI), L163, M221, and H246.

This sequence belongs to the diphthine synthase family.

It localises to the cytoplasm. The enzyme catalyses 2-[(3S)-amino-3-carboxypropyl]-L-histidyl-[translation elongation factor 2] + 4 S-adenosyl-L-methionine = diphthine methyl ester-[translation elongation factor 2] + 4 S-adenosyl-L-homocysteine + 3 H(+). The protein operates within protein modification; peptidyl-diphthamide biosynthesis. Its function is as follows. S-adenosyl-L-methionine-dependent methyltransferase that catalyzes four methylations of the modified target histidine residue in translation elongation factor 2 (EF-2), to form an intermediate called diphthine methyl ester. The four successive methylation reactions represent the second step of diphthamide biosynthesis. The protein is Diphthine methyl ester synthase (dph5) of Schizosaccharomyces pombe (strain 972 / ATCC 24843) (Fission yeast).